The following is a 198-amino-acid chain: Large ribosomal subunit protein uL13 (198 aa).

The protein belongs to the universal ribosomal protein uL13 family.

This chain is Large ribosomal subunit protein uL13 (RPL13A), found in Tetrahymena thermophila (strain SB210).